A 235-amino-acid polypeptide reads, in one-letter code: BPI fold-containing family A member 2 (235 aa).

An N-terminal signal peptide occupies residues 1–20 (MFQLGSLVVLCGLLIGNSES). Cys161 and Cys204 are disulfide-bonded.

The protein belongs to the BPI/LBP/Plunc superfamily. Plunc family. Predominates in the parotid glands, present in smaller amounts (1/10) in the submaxillary glands and in the sublingual glands, and at lower amount in the pancreas but undetectable in the liver. Found also in lacrimal gland.

The protein resides in the secreted. Its function is as follows. Has strong antibacterial activity against P.aeruginosa. The protein is BPI fold-containing family A member 2 (Bpifa2) of Mus musculus (Mouse).